Reading from the N-terminus, the 380-residue chain is Pregnancy-associated glycoprotein 1 (380 aa).

Residues 1 to 15 (MKWLVLLGLVAFSEC) form the signal peptide. The propeptide at 16 to 53 (IVKIPLRRLKTMRNVVSGKNMLNNFLKEHAYSLSQISF) is activation peptide. 2 N-linked (GlcNAc...) asparagine glycosylation sites follow: asparagine 57 and asparagine 74. In terms of domain architecture, Peptidase A1 spans 71-377 (YMGNITIGTP…DRGNDRIGLA (307 aa)). Aspartate 89 is a catalytic residue. Cysteine 102 and cysteine 107 are joined by a disulfide. N-linked (GlcNAc...) asparagine glycosylation is found at asparagine 125 and asparagine 182. A disulfide bond links cysteine 261 and cysteine 265. Aspartate 270 is a catalytic residue. Cysteine 303 and cysteine 337 are joined by a disulfide.

The protein belongs to the peptidase A1 family. In terms of processing, N-Glycosylated; the glycans terminate in either N-acetyl-galactosamine (GalNAc) or N-acetyllactosamine. Terminal GalNAc on Asn-linked glycans is greatly reduced prior to parturition while lactosamine-type N-glycans remain unaltered. Trophoblast and placental tissue. Produced specifically in the invasive binucleate cells of the placenta. Becomes detectable in maternal serum soon after implantation.

The protein localises to the secreted. It localises to the extracellular space. In terms of biological role, appears to be proteolytically inactive. In Bos taurus (Bovine), this protein is Pregnancy-associated glycoprotein 1.